The sequence spans 130 residues: Small ribosomal subunit protein uS11c (130 aa).

Belongs to the universal ribosomal protein uS11 family. In terms of assembly, part of the 30S ribosomal subunit.

It is found in the plastid. Its subcellular location is the chloroplast. The polypeptide is Small ribosomal subunit protein uS11c (Tetradesmus obliquus (Green alga)).